Here is a 124-residue protein sequence, read N- to C-terminus: Small ribosomal subunit protein uS12 (124 aa).

3-methylthioaspartic acid is present on D89.

Belongs to the universal ribosomal protein uS12 family. In terms of assembly, part of the 30S ribosomal subunit. Contacts proteins S8 and S17. May interact with IF1 in the 30S initiation complex.

In terms of biological role, with S4 and S5 plays an important role in translational accuracy. Interacts with and stabilizes bases of the 16S rRNA that are involved in tRNA selection in the A site and with the mRNA backbone. Located at the interface of the 30S and 50S subunits, it traverses the body of the 30S subunit contacting proteins on the other side and probably holding the rRNA structure together. The combined cluster of proteins S8, S12 and S17 appears to hold together the shoulder and platform of the 30S subunit. The protein is Small ribosomal subunit protein uS12 of Shewanella sediminis (strain HAW-EB3).